We begin with the raw amino-acid sequence, 412 residues long: Divalent metal cation transporter MntH (412 aa).

Over 1–19 (MTNYRVESSSGRAARKMRL) the chain is Cytoplasmic. Residues 20–39 (ALMGPAFIAAIGYIDPGNFA) traverse the membrane as a helical segment. At 40–51 (TNIQAGASFGYQ) the chain is on the periplasmic side. The chain crosses the membrane as a helical span at residues 52 to 71 (LLWVVVWANLMAMLIQILSA). The Cytoplasmic segment spans residues 72–95 (KLGIATGKNLAEQIRDHYPRPFVW). The chain crosses the membrane as a helical span at residues 96 to 118 (FYWVQAEIIAMATDLAEFIGAAI). At 119–125 (GFKLILG) the chain is on the periplasmic side. Residues 126-145 (VSLLQGAVLTGIATFLILML) traverse the membrane as a helical segment. At 146–155 (QRRGQKPLEK) the chain is on the cytoplasmic side. Residues 156–175 (VIGGLLLFVAAAYIVELIFS) traverse the membrane as a helical segment. At 176–196 (QPNLAQLGKGMVIPSLPTSEA) the chain is on the periplasmic side. The chain crosses the membrane as a helical span at residues 197-220 (VFLAAGVLGATIMPHVIYLHSSLT). Over 221-238 (QHLHGGSRQQRYSATKWD) the chain is Cytoplasmic. A helical transmembrane segment spans residues 239-258 (VAIAMTIAGFVNLAMMATAA). The Periplasmic portion of the chain corresponds to 259 to 276 (AAFHFSGHTGVADLDEAY). A helical transmembrane segment spans residues 277–297 (LTLQPLLSHAAATVFGLSLVA). The Cytoplasmic segment spans residues 298-327 (AGLSSTVVGTLAGQVVMQGFIRFHIPLWVR). The chain crosses the membrane as a helical span at residues 328–344 (RTVTMLPSFIVILMGLD). Residues 345 to 350 (PTRILV) lie on the Periplasmic side of the membrane. The helical transmembrane segment at 351–370 (MSQVLLSFGIALALVPLLIF) threads the bilayer. Topologically, residues 371–387 (TSDSKLMGDLVNSKRVK) are cytoplasmic. The helical transmembrane segment at 388–406 (QTGWVIVVLVVALNIWLLV) threads the bilayer. Residues 407-412 (GTALGL) lie on the Periplasmic side of the membrane.

This sequence belongs to the NRAMP family.

It localises to the cell inner membrane. Its function is as follows. H(+)-stimulated, divalent metal cation uptake system. The polypeptide is Divalent metal cation transporter MntH (Escherichia coli O127:H6 (strain E2348/69 / EPEC)).